An 89-amino-acid polypeptide reads, in one-letter code: Elongation factor 1-beta (89 aa).

It belongs to the EF-1-beta/EF-1-delta family.

In terms of biological role, promotes the exchange of GDP for GTP in EF-1-alpha/GDP, thus allowing the regeneration of EF-1-alpha/GTP that could then be used to form the ternary complex EF-1-alpha/GTP/AAtRNA. The protein is Elongation factor 1-beta of Methanococcus maripaludis (strain C6 / ATCC BAA-1332).